Consider the following 152-residue polypeptide: UPF0756 membrane protein EF_1246 (152 aa).

Transmembrane regions (helical) follow at residues 4 to 24 (WLFL…SLLI), 52 to 72 (LGVT…QIGL), 85 to 105 (WLGI…VGLI), and 115 to 135 (LVFG…GPII).

It belongs to the UPF0756 family.

It localises to the cell membrane. The chain is UPF0756 membrane protein EF_1246 from Enterococcus faecalis (strain ATCC 700802 / V583).